Reading from the N-terminus, the 402-residue chain is Indole-3-glycerol phosphate synthase, chloroplastic (402 aa).

The transit peptide at 1-65 directs the protein to the chloroplast; the sequence is MEGLVPVQRL…SDLKESLAVS (65 aa).

Belongs to the TrpC family. In terms of tissue distribution, expressed in leaves.

It is found in the plastid. The protein resides in the chloroplast. The enzyme catalyses 1-(2-carboxyphenylamino)-1-deoxy-D-ribulose 5-phosphate + H(+) = (1S,2R)-1-C-(indol-3-yl)glycerol 3-phosphate + CO2 + H2O. The protein operates within amino-acid biosynthesis; L-tryptophan biosynthesis; L-tryptophan from chorismate: step 4/5. Its function is as follows. Indole-3-glycerol phosphate synthase required for tryptophan biosynthesis. The polypeptide is Indole-3-glycerol phosphate synthase, chloroplastic (Arabidopsis thaliana (Mouse-ear cress)).